A 361-amino-acid chain; its full sequence is 5-formaminoimidazole-4-carboxamide-1-(beta)-D-ribofuranosyl 5'-monophosphate synthetase (361 aa).

5-amino-1-(5-phospho-beta-D-ribosyl)imidazole-4-carboxamide-binding residues include His-27 and Ser-94. Residues 116-348 form the ATP-grasp domain; sequence RQILRWEAER…MGQRIAKEIK (233 aa). ATP-binding positions include 146–208 and Glu-230; that span reads PDEI…TNYC. Residue Asn-258 coordinates 5-amino-1-(5-phospho-beta-D-ribosyl)imidazole-4-carboxamide. Mg(2+) is bound by residues Gln-297 and Glu-310.

This sequence belongs to the phosphohexose mutase family. Mg(2+) serves as cofactor. The cofactor is Mn(2+).

The catalysed reaction is 5-amino-1-(5-phospho-beta-D-ribosyl)imidazole-4-carboxamide + formate + ATP = 5-formamido-1-(5-phospho-D-ribosyl)imidazole-4-carboxamide + ADP + phosphate. The protein operates within purine metabolism; IMP biosynthesis via de novo pathway; 5-formamido-1-(5-phospho-D-ribosyl)imidazole-4-carboxamide from 5-amino-1-(5-phospho-D-ribosyl)imidazole-4-carboxamide (formate route): step 1/1. In terms of biological role, catalyzes the ATP- and formate-dependent formylation of 5-aminoimidazole-4-carboxamide-1-beta-d-ribofuranosyl 5'-monophosphate (AICAR) to 5-formaminoimidazole-4-carboxamide-1-beta-d-ribofuranosyl 5'-monophosphate (FAICAR) in the absence of folates. The polypeptide is 5-formaminoimidazole-4-carboxamide-1-(beta)-D-ribofuranosyl 5'-monophosphate synthetase (Methanococcus aeolicus (strain ATCC BAA-1280 / DSM 17508 / OCM 812 / Nankai-3)).